The chain runs to 517 residues: GMP synthase [glutamine-hydrolyzing] (517 aa).

Residues 9-199 enclose the Glutamine amidotransferase type-1 domain; the sequence is RILILDFGSQ…VLNVCGCEGL (191 aa). The Nucleophile role is filled by cysteine 86. Active-site residues include histidine 173 and glutamate 175. Positions 200–392 constitute a GMPS ATP-PPase domain; that stretch reads WTSASIIEDA…LGLPYNMLYR (193 aa). 227–233 is an ATP binding site; the sequence is SGGVDSS.

In terms of assembly, homodimer.

The catalysed reaction is XMP + L-glutamine + ATP + H2O = GMP + L-glutamate + AMP + diphosphate + 2 H(+). Its pathway is purine metabolism; GMP biosynthesis; GMP from XMP (L-Gln route): step 1/1. Its function is as follows. Catalyzes the synthesis of GMP from XMP. This Aliivibrio salmonicida (strain LFI1238) (Vibrio salmonicida (strain LFI1238)) protein is GMP synthase [glutamine-hydrolyzing].